Here is a 207-residue protein sequence, read N- to C-terminus: Germin-like protein 1 (207 aa).

A signal peptide spans 1–17; that stretch reads MLRIIFLLSLLFALSND. Cys-23 and Cys-38 are disulfide-bonded. One can recognise a Cupin type-1 domain in the interval 51 to 197; sequence FSLGTPGNTT…TTFLPPATVK (147 aa). A glycan (N-linked (GlcNAc...) asparagine) is linked at Asn-58. Mn(2+) is bound by residues His-99, His-101, Glu-106, and His-145.

It belongs to the germin family. Oligomer (believed to be a pentamer but probably hexamer).

It localises to the secreted. It is found in the extracellular space. The protein localises to the apoplast. May play a role in plant defense. Probably has no oxalate oxidase activity even if the active site is conserved. The sequence is that of Germin-like protein 1 (GER1) from Brassica napus (Rape).